A 238-amino-acid polypeptide reads, in one-letter code: Ribonuclease PH (238 aa).

Phosphate is bound by residues R86 and 124 to 126; that span reads GTR.

It belongs to the RNase PH family. Homohexameric ring arranged as a trimer of dimers.

The catalysed reaction is tRNA(n+1) + phosphate = tRNA(n) + a ribonucleoside 5'-diphosphate. Its function is as follows. Phosphorolytic 3'-5' exoribonuclease that plays an important role in tRNA 3'-end maturation. Removes nucleotide residues following the 3'-CCA terminus of tRNAs; can also add nucleotides to the ends of RNA molecules by using nucleoside diphosphates as substrates, but this may not be physiologically important. Probably plays a role in initiation of 16S rRNA degradation (leading to ribosome degradation) during starvation. This Azorhizobium caulinodans (strain ATCC 43989 / DSM 5975 / JCM 20966 / LMG 6465 / NBRC 14845 / NCIMB 13405 / ORS 571) protein is Ribonuclease PH.